The chain runs to 456 residues: MSLTNGVAPSLEKLAAEQKSRKKWLLVQPKSQTSMMVDSGAVSMPLNLIMVATLASKYFDVTFLDERTGDTIPQDFSGYDVVAITSRTLNAKNAYRIGDRAKAQGKIVLIGGVHPTMLTDEASLHCTSVIYGEIESVWEELAIDIFRGKMKSVYKASNLKPMTTMTPPDFSFALNSPHAKKYSQLIPILATKGCPVGCSFCTTPTVYGKSFRYREIDLVLDEMRAHQERLGKKKVRFSFMDDNISFRPKYFMELLEGMAKLGVRWNANISMNFLQKPEVAELAGRSGCELMSIGFESLNPDILKSMNKGSNRLQNYEAVVSNLHKHKIAIQGYFIFGFDDDSEKSFQATYDFIMQNRIEFPVFSLLTPFPGTPYFEEMKDRVRHFDWDKYDTYHYMFEPKKLGGEKLLENFIKLQREVYKGSAIMKRMQGKPLNWVWFVNFLMNRFTRKLTPEMYL.

The Radical SAM core domain occupies 178 to 405 (HAKKYSQLIP…MFEPKKLGGE (228 aa)). [4Fe-4S] cluster contacts are provided by cysteine 194, cysteine 198, and cysteine 201.

The protein belongs to the radical SAM superfamily. [4Fe-4S] cluster is required as a cofactor.

The protein localises to the cytoplasm. It carries out the reaction 8-ethyl-12-methyl-3-vinylbacteriochlorophyllide d + S-adenosyl-L-methionine = 8,12-diethyl-3-vinylbacteriochlorophyllide d + S-adenosyl-L-homocysteine + H(+). It functions in the pathway porphyrin-containing compound metabolism; bacteriochlorophyll biosynthesis (light-independent). Involved in the biosynthesis of the major light-harvesting pigment bacteriochlorophyll c (BChlc), which confers a significant competitive advantage to green sulfur bacteria living at limiting red and near-infrared light intensities. BchR is a methyltransferase that adds a single methyl group to the methyl carbon at the C-12(1) position of 8-ethyl-12-methyl-3-vinylbacteriochlorophyllide d to yield 8,12-diethyl-3-vinylbacteriochlorophyllide d. This is Bacteriochlorophyllide d C-12(1)-methyltransferase from Chlorobaculum tepidum (strain ATCC 49652 / DSM 12025 / NBRC 103806 / TLS) (Chlorobium tepidum).